Here is an 81-residue protein sequence, read N- to C-terminus: Large ribosomal subunit protein bL31B (81 aa).

It belongs to the bacterial ribosomal protein bL31 family. Type B subfamily. Part of the 50S ribosomal subunit.

This is Large ribosomal subunit protein bL31B from Bacillus anthracis (strain A0248).